The sequence spans 690 residues: Elongation factor G (690 aa).

A tr-type G domain is found at 8–283 (SRCRNIGIMA…AVVDFLPSPS (276 aa)). GTP contacts are provided by residues 17–24 (AHIDAGKT), 81–85 (DTPGH), and 135–138 (NKMD).

The protein belongs to the TRAFAC class translation factor GTPase superfamily. Classic translation factor GTPase family. EF-G/EF-2 subfamily.

It is found in the cytoplasm. Functionally, catalyzes the GTP-dependent ribosomal translocation step during translation elongation. During this step, the ribosome changes from the pre-translocational (PRE) to the post-translocational (POST) state as the newly formed A-site-bound peptidyl-tRNA and P-site-bound deacylated tRNA move to the P and E sites, respectively. Catalyzes the coordinated movement of the two tRNA molecules, the mRNA and conformational changes in the ribosome. The chain is Elongation factor G from Anaplasma marginale (strain St. Maries).